Here is a 637-residue protein sequence, read N- to C-terminus: Transmembrane 9 superfamily member 10 (637 aa).

A signal peptide spans 1-23 (MAKVRILIFTLVLFFSLNVHIHG). Residues 24–274 (FYLPGVAPQD…YLLMADDQIH (251 aa)) lie on the Lumenal side of the membrane. A helical membrane pass occupies residues 275–295 (WFSIVNSMMIVLFLSGMVAMI). Residues 296–344 (MLRTLYRDISNYNQLESHEEALEETGWKLVHGDVFRPPTNPELLCVYAG) are Cytoplasmic-facing. The helical transmembrane segment at 345–365 (TGVQCFGMILVTMIFACLGFL) threads the bilayer. The Lumenal segment spans residues 366–370 (SPSNR). The chain crosses the membrane as a helical span at residues 371–391 (GGLMTAMLLLWVFMGLLAGYA). The Cytoplasmic segment spans residues 392–411 (SSRLYKTLRGTEWKRNALKT). Residues 412–432 (AFMFPATVFVAFFVLNAIIWG) form a helical membrane-spanning segment. The Lumenal portion of the chain corresponds to 433–444 (QKSSGAVPFGTM). A helical transmembrane segment spans residues 445–465 (FALVVLWFGISVPLVFIGGYI). The Cytoplasmic segment spans residues 466–494 (GFRKPAPEDPVKTNKIPRQIPTQAWYMNP). A helical membrane pass occupies residues 495-515 (IFSILIGGILPFGAVFIELFF). The Lumenal segment spans residues 516–527 (ILTSIWLHQFYY). A helical transmembrane segment spans residues 528–548 (IFGFLFIVFIILIITCAEITV). Topologically, residues 549 to 566 (VLCYFQLCSEDYQWWWRS) are cytoplasmic. Residues 567–587 (YLTSGSSAVYLFLYAVFYFYT) form a helical membrane-spanning segment. Residues 588–593 (KLEITK) are Lumenal-facing. A helical transmembrane segment spans residues 594 to 614 (LVSAVLYFGYMLIVSYVFFVF). The Cytoplasmic segment spans residues 615–637 (TGAIGFYACFWFTRLIYSSVKID). The Endoplasmic reticulum export signal signature appears at 626 to 631 (FTRLIY). Residues 635–637 (KID) carry the Golgi retention signal motif.

It belongs to the nonaspanin (TM9SF) (TC 9.A.2) family.

The protein resides in the endosome membrane. It localises to the golgi apparatus membrane. In Arabidopsis thaliana (Mouse-ear cress), this protein is Transmembrane 9 superfamily member 10.